The sequence spans 466 residues: 3-isopropylmalate dehydratase large subunit (466 aa).

3 residues coordinate [4Fe-4S] cluster: Cys347, Cys407, and Cys410.

Belongs to the aconitase/IPM isomerase family. LeuC type 1 subfamily. Heterodimer of LeuC and LeuD. It depends on [4Fe-4S] cluster as a cofactor.

It carries out the reaction (2R,3S)-3-isopropylmalate = (2S)-2-isopropylmalate. The protein operates within amino-acid biosynthesis; L-leucine biosynthesis; L-leucine from 3-methyl-2-oxobutanoate: step 2/4. Catalyzes the isomerization between 2-isopropylmalate and 3-isopropylmalate, via the formation of 2-isopropylmaleate. This is 3-isopropylmalate dehydratase large subunit from Shigella boydii serotype 4 (strain Sb227).